Reading from the N-terminus, the 764-residue chain is Polymeric immunoglobulin receptor (764 aa).

Positions 1–18 are cleaved as a signal peptide; it reads MLLFVLTCLLAVFPAIST. The 102-residue stretch at 19–120 folds into the Ig-like V-type 1; required for binding to polymeric IgA and IgM domain; sequence KSPIFGPEEV…GLGINSRGLS (102 aa). At 19–638 the chain is on the extracellular side; the sequence is KSPIFGPEEV…SSEEQGGSSR (620 aa). Intrachain disulfides connect Cys40–Cys110 and Cys56–Cys64. N-linked (GlcNAc...) asparagine glycans are attached at residues Asn83, Asn90, Asn135, and Asn186. Ig-like V-type domains are found at residues 145–237, 250–352, 364–458, and 462–561; these read GRTV…DLQV, RGSV…ESTI, GGSV…IKII, and PNLK…VYVA. 5 cysteine pairs are disulfide-bonded: Cys152/Cys220, Cys257/Cys325, Cys271/Cys279, Cys371/Cys441, and Cys385/Cys395. Residue Asn421 is glycosylated (N-linked (GlcNAc...) asparagine). Residue Asn469 is glycosylated (N-linked (GlcNAc...) (complex) asparagine). 3 disulfide bridges follow: Cys482/Cys544, Cys486/Cys520, and Cys496/Cys503. Asn499 is a glycosylation site (N-linked (GlcNAc...) asparagine). Basic and acidic residues predominate over residues 609–619; it reads KAVADTRDQAD. Positions 609–637 are disordered; sequence KAVADTRDQADGSRASVDSGSSEEQGGSS. A compositionally biased stretch (low complexity) spans 627 to 637; that stretch reads SGSSEEQGGSS. A helical transmembrane segment spans residues 639–661; that stretch reads ALVSTLVPLGLVLAVGAVAVGVA. Over 662-764 the chain is Cytoplasmic; the sequence is RARHRKNVDR…AEAQDGPQEA (103 aa). Phosphoserine occurs at positions 673, 682, 689, and 735. Positions 717 to 738 are disordered; it reads ATTESTTETKEPKKAKRSSKEE. The span at 723-738 shows a compositional bias: basic and acidic residues; it reads TETKEPKKAKRSSKEE.

As to quaternary structure, interacts (mainly via CDR1-like domain) with dimeric IgA. Interacts (mainly via CDR2-like domain) with pentameric IgM. In terms of assembly, either free or part of the secretory IgA (sIgA) complex that consists of two, four or five IgA monomers, and two additional non-Ig polypeptides, namely the JCHAIN and the secretory component (the proteolytic product of PIGR). Free secretory component interacts with bacterial antigens toxA of C.difficile and eaeA of E.coli. N-glycosylated. N-glycosylation is required for anchoring IgA molecules to mucus, but is not necessary for Ig binding.

It localises to the cell membrane. The protein resides in the secreted. Its function is as follows. Mediates selective transcytosis of polymeric IgA and IgM across mucosal epithelial cells. Binds polymeric IgA and IgM at the basolateral surface of epithelial cells. The complex is then transported across the cell to be secreted at the apical surface. During this process, a cleavage occurs that separates the extracellular (known as the secretory component) from the transmembrane segment. Through its N-linked glycans ensures anchoring of secretory IgA (sIgA) molecules to mucus lining the epithelial surface to neutralize extracellular pathogens. On its own (free form) may act as a non-specific microbial scavenger to prevent pathogen interaction with epithelial cells. The chain is Polymeric immunoglobulin receptor (PIGR) from Homo sapiens (Human).